A 343-amino-acid polypeptide reads, in one-letter code: S-adenosylmethionine:tRNA ribosyltransferase-isomerase (343 aa).

This sequence belongs to the QueA family. In terms of assembly, monomer.

Its subcellular location is the cytoplasm. The enzyme catalyses 7-aminomethyl-7-carbaguanosine(34) in tRNA + S-adenosyl-L-methionine = epoxyqueuosine(34) in tRNA + adenine + L-methionine + 2 H(+). It functions in the pathway tRNA modification; tRNA-queuosine biosynthesis. Transfers and isomerizes the ribose moiety from AdoMet to the 7-aminomethyl group of 7-deazaguanine (preQ1-tRNA) to give epoxyqueuosine (oQ-tRNA). In Pelobacter propionicus (strain DSM 2379 / NBRC 103807 / OttBd1), this protein is S-adenosylmethionine:tRNA ribosyltransferase-isomerase.